The sequence spans 484 residues: Zinc metalloproteinase/disintegrin PMMP-2 (484 aa).

Positions 1–20 (MIQVLLVTICLAVFPYQGSS) are cleaved as a signal peptide. A propeptide spanning residues 21 to 190 (IILESGNVDD…KASQLNLTPL (170 aa)) is cleaved from the precursor. A Peptidase M12B domain is found at 197–395 (RYVKLAIVVD…YNPQCILNAP (199 aa)). Asn239 carries N-linked (GlcNAc...) asparagine glycosylation. Intrachain disulfides connect Cys308-Cys390, Cys352-Cys374, and Cys354-Cys357. His333 is a binding site for Zn(2+). Residue Glu334 is part of the active site. Zn(2+) contacts are provided by His337 and His343. Residues 396–413 (LRTDTVSTPVSGNEFLEA) constitute a propeptide that is removed on maturation. One can recognise a Disintegrin domain in the interval 403-484 (TPVSGNEFLE…ADCPRNGLYG (82 aa)). Cystine bridges form between Cys417/Cys432, Cys419/Cys427, Cys426/Cys449, Cys440/Cys446, Cys445/Cys470, and Cys458/Cys477. Residues 462–464 (RGD) carry the Cell attachment site motif.

It belongs to the venom metalloproteinase (M12B) family. P-II subfamily. P-IIa sub-subfamily. In terms of assembly, monomer. The cofactor is Zn(2+). As to expression, expressed by the venom gland.

It localises to the secreted. Its function is as follows. Impairs hemostasis in the envenomed animal. Inhibits platelet aggregation induced by ADP, thrombin, platelet-activating factor and collagen. Acts by inhibiting fibrinogen interaction with platelet receptors GPIIb/GPIIIa (ITGA2B/ITGB3). The polypeptide is Zinc metalloproteinase/disintegrin PMMP-2 (Protobothrops mucrosquamatus (Taiwan habu)).